The following is a 910-amino-acid chain: Auxilin (910 aa).

Tandem repeats lie at residues 33–36 (NLKD), 37–40 (NLKD), and 41–44 (TLKD). Positions 33 to 44 (NLKDNLKDTLKD) are 3 X 4 AA approximate tandem repeats. Residues 52-219 (SVTSYTKGDL…GYMCDLLADK (168 aa)) form the Phosphatase tensin-type domain. Ser-109 is subject to Phosphoserine. The Phosphocysteine intermediate role is filled by Cys-161. The C2 tensin-type domain occupies 225–363 (FKPLTIKSIT…FQVTLDVELQ (139 aa)). An SH3-binding motif is present at residues 406–414 (PIDIPPDNP). Positions 448-772 (QESEQSDDEL…RGKAAANLEG (325 aa)) are disordered. 4 positions are modified to phosphoserine: Ser-450, Ser-453, Ser-560, and Ser-567. A compositionally biased stretch (low complexity) spans 547-569 (PSGPTSTQSTPRRSATSTSASPT). Positions 596-626 (FLNTASASSDPFLQPTRSPSPTVHASSTPAV) are enriched in polar residues. Residues 651–666 (SAATSPTGSSHGTPTH) are compositionally biased toward low complexity. Over residues 715–725 (MGGGWQQGGGY) the composition is skewed to gly residues. Residues 732–758 (SKPQSSMPHSSPQNRPNYNVSFSSMPG) are compositionally biased toward polar residues. One can recognise a J domain in the interval 846–910 (TKWKPVGMAD…FENQGQKPLY (65 aa)).

As to quaternary structure, forms a complex composed of HSPA8, CLTC and DNAJC6. Interacts with HSPA8/HSC70 in an ATP-dependent manner; this interaction stimulates the HSPA8's ATPase activity. Interacts with CLTC; this interaction produces a local change in heavy-chain contacts, creating a detectable global distortion of the clathrin coat. Interacts with AP2A2. Interacts with DNM1(GTP-bound form); this interaction allows clathrin-coated vesicle (CCV) formation at the plasma membrane. The N-terminus is blocked. In terms of processing, phosphorylation at Ser-567 modulates its ability to bind CLTC and therefore the synaptic vesicle endocytosis (SVE). In terms of tissue distribution, brain.

The protein resides in the cytoplasmic vesicle. It is found in the clathrin-coated vesicle. Functionally, may act as a protein phosphatase and/or a lipid phosphatase. Co-chaperone that recruits HSPA8/HSC70 to clathrin-coated vesicles (CCVs) and promotes the ATP-dependent dissociation of clathrin from CCVs and participates in clathrin-mediated endocytosis of synaptic vesicles and their recycling and also in intracellular trafficking. Firstly, binds tightly to the clathrin cages, at a ratio of one DNAJC6 per clathrin triskelion. The HSPA8:ATP complex then binds to the clathrin-auxilin cage, initially at a ratio of one HSPA8 per triskelion leading to ATP hydrolysis stimulation and causing a conformational change in the HSPA8. This cycle is repeated three times to drive to a complex containing the clathrin-auxilin cage associated to three HSPA8:ADP complex. The ATP hydrolysis of the third HSPA8:ATP complex leads to a concerted dismantling of the cage into component triskelia. Then, dissociates from the released triskelia and be recycled to initiate another cycle of HSPA8's recruitment. Also acts during the early steps of clathrin-coated vesicle (CCV) formation through its interaction with the GTP bound form of DNM1. This chain is Auxilin, found in Bos taurus (Bovine).